The sequence spans 274 residues: Protein TIFY 11A (274 aa).

Disordered stretches follow at residues Ser-49 to Gly-95 and Pro-139 to Asn-176. One can recognise a Tify domain in the interval Ser-92–Gln-127. Residues Pro-139 to Ser-150 are compositionally biased toward polar residues. Residues Asp-161–Arg-185 adopt a coiled-coil conformation. The Jas signature appears at Ile-182–Gln-206. The short motif at Ala-183–Arg-190 is the Nuclear localization signal element. The tract at residues Gln-206–Leu-274 is disordered. Residues Ile-249–Leu-274 show a composition bias toward basic and acidic residues.

This sequence belongs to the TIFY/JAZ family. As to quaternary structure, homo- and heterodimer. Interacts with MYC2, MYC3, MYC4, AFPH2/NINJA, TIFY10A/JAZ1, TIFY10B/JAZ2, TIFY11B/JAZ6, TIFY5A/JAZ8 and TIFY3B/JAZ12. (Microbial infection) Interacts with the pathogenic Pseudomonas syringae HopZ1a protein. In terms of processing, (Microbial infection) Acetylated by Pseudomonas syringae HopZ1a. Ubiquitinated. Targeted for degradation by the SCF(COI1) E3 ubiquitin ligase-proteasome pathway during jasmonate signaling.

It localises to the nucleus. Functionally, repressor of jasmonate responses. The polypeptide is Protein TIFY 11A (Arabidopsis thaliana (Mouse-ear cress)).